The following is a 490-amino-acid chain: Probable G-protein coupled receptor npr-8 (490 aa).

The Extracellular portion of the chain corresponds to 1 to 55 (MEVKDIDNYCDRGISPNASNYLTYPFDGLCLQKFFYQLQTSLRRFTPYEEIIYTT). N17 is a glycosylation site (N-linked (GlcNAc...) asparagine). Residues 56–76 (VYIIISVAAVIGNGLVIMAVV) form a helical membrane-spanning segment. The Cytoplasmic portion of the chain corresponds to 77–86 (RKKTMRTNRN). The helical transmembrane segment at 87–107 (VLILNLALSNLILAITNIPFL) threads the bilayer. Residues 108–125 (WLPSIDFEFPYSRFFCKF) are Extracellular-facing. The helical transmembrane segment at 126–146 (ANVLPGSNIYCSTLTISVMAI) threads the bilayer. Residues 147-166 (DRYYSVKKLKIASNRKQCFH) lie on the Cytoplasmic side of the membrane. A helical transmembrane segment spans residues 167 to 187 (AVLVSLAIWIVSFILSLPLLL). The Extracellular segment spans residues 188–236 (YYETSMLYVMREIRVVDQSGQEVIRSYGWRQCRLVSAGRLPDITQSIQL). The helical transmembrane segment at 237 to 257 (LMSILQVAFLYIVPLFVLSIF) threads the bilayer. Residues 258-331 (NVKLTRFLKT…QRTNRTTSLL (74 aa)) are Cytoplasmic-facing. The segment at 272–322 (MSKTRAPPKRFDRSDSHHNSLKNNNNHTSSLRSPSMPSIRSSITERNKTNQ) is disordered. Residues 280–289 (KRFDRSDSHH) are compositionally biased toward basic and acidic residues. Residues 292–313 (LKNNNNHTSSLRSPSMPSIRSS) are compositionally biased toward low complexity. A helical membrane pass occupies residues 332–352 (IAMAGSYAALWFPFTLITFLI). Over 353-374 (DFELIINQDYVNLVERIDQTCK) the chain is Extracellular. The helical transmembrane segment at 375 to 395 (MVSMLSICVNPFLYGFLNTNF) threads the bilayer. Over 396–490 (RHEFSDIYYR…DDDIEKDSFV (95 aa)) the chain is Cytoplasmic.

The protein belongs to the G-protein coupled receptor 1 family.

The protein localises to the cell membrane. In terms of biological role, not known. Putative receptor. This Caenorhabditis elegans protein is Probable G-protein coupled receptor npr-8.